The chain runs to 250 residues: MSKENKTTDFGFTQVPWEEKQKKVAGVFHSVAAKYDLMNDLMSFGIHRIWKKQTIAKSGVHKGDNVLDLAGGTGDLAYKFCQMVGQQGKVILSDINSSMLEVGKEKLTNKGCVGNIEYVQANAECLPFPDNYFDCITISFGLRNVTDKDKALASMCRVLKPGGRLLVLEFSKPIIPLLSKVYDEYSFKALPFLGKIITQDAESYKYLAESIRKHPDQQTLKQMMYDAGFDNVEYQNMTGGIVALHIGYKY.

Residues Thr73, Asp94, Asn122–Ala123, and Ser139 each bind S-adenosyl-L-methionine.

Belongs to the class I-like SAM-binding methyltransferase superfamily. MenG/UbiE family.

It catalyses the reaction a 2-demethylmenaquinol + S-adenosyl-L-methionine = a menaquinol + S-adenosyl-L-homocysteine + H(+). It carries out the reaction a 2-methoxy-6-(all-trans-polyprenyl)benzene-1,4-diol + S-adenosyl-L-methionine = a 5-methoxy-2-methyl-3-(all-trans-polyprenyl)benzene-1,4-diol + S-adenosyl-L-homocysteine + H(+). It participates in quinol/quinone metabolism; menaquinone biosynthesis; menaquinol from 1,4-dihydroxy-2-naphthoate: step 2/2. It functions in the pathway cofactor biosynthesis; ubiquinone biosynthesis. Functionally, methyltransferase required for the conversion of demethylmenaquinol (DMKH2) to menaquinol (MKH2) and the conversion of 2-polyprenyl-6-methoxy-1,4-benzoquinol (DDMQH2) to 2-polyprenyl-3-methyl-6-methoxy-1,4-benzoquinol (DMQH2). This is Ubiquinone/menaquinone biosynthesis C-methyltransferase UbiE from Francisella tularensis subsp. tularensis (strain WY96-3418).